The primary structure comprises 398 residues: MSQHRHQRHSRVISSSPVDTTSVGFCPTFKKFKRNDDECRAFVKRVIMSRFFKIIMISTVTSNAFFMALWTSYDIRYRLFRLLEFSEIFFVSICTSELSMKVYVDPINYWKNGYNLLDVIIIIVMFLPYALRQLMGKQFTYLYIADGMQSLRILKLIGYSQGIRTLITAVGQTVYTVASVLLLLFLLMYIFAILGFCLFGSPDNGDHDNWGNLAAAFFTLFSLATVDGWTDLQKQLDNREFALSRAFTIIFILLASFIFLNMFVGVMIMHTEDSIRKFERELMLEQQEMLMGEKQVILQRQQEEISRLMHIQKNADCTSFSELVENFKKTLSHTDPMVLDDFGTSLPFIDIYFSTLDYQDTTVHKLQELYYEIVHVLSLMLEDLPQEKPQSLEKVDEK.

At 1–48 (MSQHRHQRHSRVISSSPVDTTSVGFCPTFKKFKRNDDECRAFVKRVIM) the chain is on the cytoplasmic side. Residues 49-71 (SRFFKIIMISTVTSNAFFMALWT) traverse the membrane as a helical segment. Residues 72 to 80 (SYDIRYRLF) are Extracellular-facing. A helical transmembrane segment spans residues 81-107 (RLLEFSEIFFVSICTSELSMKVYVDPI). Residue N108 is a topological domain, cytoplasmic. A helical transmembrane segment spans residues 109–131 (YWKNGYNLLDVIIIIVMFLPYAL). Residues 132–143 (RQLMGKQFTYLY) lie on the Extracellular side of the membrane. Residues 144–160 (IADGMQSLRILKLIGYS) traverse the membrane as a helical segment. Topologically, residues 161-168 (QGIRTLIT) are cytoplasmic. Residues 169–195 (AVGQTVYTVASVLLLLFLLMYIFAILG) form a helical membrane-spanning segment. Residues 196-216 (FCLFGSPDNGDHDNWGNLAAA) are Extracellular-facing. Residues 217–236 (FFTLFSLATVDGWTDLQKQL) constitute an intramembrane region (helical; Pore-forming). The Extracellular segment spans residues 237 to 242 (DNREFA). The helical transmembrane segment at 243–268 (LSRAFTIIFILLASFIFLNMFVGVMI) threads the bilayer. At 269-398 (MHTEDSIRKF…PQSLEKVDEK (130 aa)) the chain is on the cytoplasmic side.

The protein belongs to the cation channel sperm-associated (TC 1.A.1.19) family. In terms of assembly, component of the CatSper complex or CatSpermasome composed of the core pore-forming members CATSPER1, CATSPER2, CATSPER3 and CATSPER4 as well as auxiliary members CATSPERB, CATSPERG, CATSPERD, CATSPERE, CATSPERZ, C2CD6/CATSPERT, TMEM249, TMEM262 and EFCAB9. HSPA1 may be an additional auxiliary complex member. The core complex members CATSPER1, CATSPER2, CATSPER3 and CATSPER4 form a heterotetrameric channel. The auxiliary CATSPERB, CATSPERG, CATSPERD and CATSPERE subunits form a pavilion-like structure over the pore which stabilizes the complex through interactions with CATSPER4, CATSPER3, CATSPER1 and CATSPER2 respectively. TMEM262/CATSPERH interacts with CATSPERB, further stabilizing the complex. C2CD6/CATSPERT interacts at least with CATSPERD and is required for targeting the CatSper complex in the flagellar membrane. As to expression, testis-specific.

The protein localises to the cell projection. It is found in the cilium. It localises to the flagellum membrane. It carries out the reaction Ca(2+)(in) = Ca(2+)(out). With respect to regulation, the CatSper calcium channel is indirectly activated by extracellular progesterone and prostaglandins following the sequence: progesterone &gt; PGF1-alpha = PGE1 &gt; PGA1 &gt; PGE2 &gt;&gt; PGD2. The CatSper calcium channel is directly inhibited by endocannabinoid 2-arachidonoylglycerol (2AG). Indirect activation by progesterone takes place via the following mechanism: progesterone binds and activates the acylglycerol lipase ABHD2, which in turn mediates hydrolysis of 2AG inhibitor, relieving inhibition of the CatSper channel. The primary effect of progesterone activation is to shift voltage dependence towards more physiological, negative membrane potentials; it is not mediated by metabotropic receptors and second messengers. Sperm capacitation enhances the effect of progesterone by providing additional negative shift. Also activated by the elevation of intracellular pH. In terms of biological role, pore-forming subunit of the CatSper complex, a sperm-specific voltage-gated calcium channel that plays a central role in calcium-dependent physiological responses essential for successful fertilization, such as sperm hyperactivation, acrosome reaction and chemotaxis towards the oocyte. The polypeptide is Cation channel sperm-associated protein 3 (CATSPER3) (Homo sapiens (Human)).